A 57-amino-acid chain; its full sequence is Large ribosomal subunit protein eL37 (57 aa).

Cys-20, Cys-23, Cys-35, and Cys-38 together coordinate Zn(2+). The C4-type zinc-finger motif lies at 20–38 (CRRCGEKSYHKQKKVCASC).

The protein belongs to the eukaryotic ribosomal protein eL37 family. The cofactor is Zn(2+).

Binds to the 23S rRNA. The chain is Large ribosomal subunit protein eL37 from Natronomonas pharaonis (strain ATCC 35678 / DSM 2160 / CIP 103997 / JCM 8858 / NBRC 14720 / NCIMB 2260 / Gabara) (Halobacterium pharaonis).